The primary structure comprises 538 residues: Endoglucanase 16 (538 aa).

An N-terminal signal peptide occupies residues 1-26 (MRWRRVGDVVAVALLLGAAAAAAAAA). Catalysis depends on Asp83, which acts as the Nucleophile. Active-site residues include His431, Asp483, and Glu492. The tract at residues 513–538 (RQESPSTTTTTTATTSSPEMGLSVNR) is disordered. Residues 516 to 530 (SPSTTTTTTATTSSP) are compositionally biased toward low complexity.

It belongs to the glycosyl hydrolase 9 (cellulase E) family.

The protein localises to the secreted. It catalyses the reaction Endohydrolysis of (1-&gt;4)-beta-D-glucosidic linkages in cellulose, lichenin and cereal beta-D-glucans.. The protein is Endoglucanase 16 of Oryza sativa subsp. japonica (Rice).